Reading from the N-terminus, the 252-residue chain is Triosephosphate isomerase (252 aa).

Substrate is bound at residue 10-12 (NWK). Histidine 96 serves as the catalytic Electrophile. Residue glutamate 168 is the Proton acceptor of the active site. Residues glycine 174, serine 214, and 235–236 (GG) each bind substrate.

The protein belongs to the triosephosphate isomerase family. As to quaternary structure, homodimer.

It is found in the cytoplasm. It catalyses the reaction D-glyceraldehyde 3-phosphate = dihydroxyacetone phosphate. It participates in carbohydrate biosynthesis; gluconeogenesis. The protein operates within carbohydrate degradation; glycolysis; D-glyceraldehyde 3-phosphate from glycerone phosphate: step 1/1. In terms of biological role, involved in the gluconeogenesis. Catalyzes stereospecifically the conversion of dihydroxyacetone phosphate (DHAP) to D-glyceraldehyde-3-phosphate (G3P). The protein is Triosephosphate isomerase of Lactococcus lactis subsp. cremoris (strain MG1363).